Here is a 235-residue protein sequence, read N- to C-terminus: Lipoprotein-releasing system ATP-binding protein LolD (235 aa).

The 231-residue stretch at 5–235 folds into the ABC transporter domain; that stretch reads FALANIYKSF…SIDESGFNKI (231 aa). An ATP-binding site is contributed by 40–47; the sequence is GKSGSGKS.

It belongs to the ABC transporter superfamily. Lipoprotein translocase (TC 3.A.1.125) family. The complex is composed of two ATP-binding proteins (LolD) and two transmembrane proteins (LolC and LolE).

The protein resides in the cell inner membrane. In terms of biological role, part of the ABC transporter complex LolCDE involved in the translocation of mature outer membrane-directed lipoproteins, from the inner membrane to the periplasmic chaperone, LolA. Responsible for the formation of the LolA-lipoprotein complex in an ATP-dependent manner. The chain is Lipoprotein-releasing system ATP-binding protein LolD from Ehrlichia chaffeensis (strain ATCC CRL-10679 / Arkansas).